The sequence spans 508 residues: NAD(P)H-quinone oxidoreductase subunit 2 B, chloroplastic (508 aa).

13 helical membrane-spanning segments follow: residues 24-44, 59-79, 99-119, 124-144, 149-169, 184-204, 227-247, 295-315, 323-343, 354-374, 395-415, 418-438, and 482-502; these read LLLF…GLIL, WLYF…LFRW, IFQF…VEYI, MAIT…MFLC, FITI…LSGY, LLMG…LYGL, PGIS…LSPA, WHLL…LIAI, MLAY…IVGD, YMLF…LFGL, ALSL…AGFF, LYLF…IGLL, and MIVC…IIAI.

It belongs to the complex I subunit 2 family. In terms of assembly, NDH is composed of at least 16 different subunits, 5 of which are encoded in the nucleus.

The protein resides in the plastid. Its subcellular location is the chloroplast thylakoid membrane. The enzyme catalyses a plastoquinone + NADH + (n+1) H(+)(in) = a plastoquinol + NAD(+) + n H(+)(out). It carries out the reaction a plastoquinone + NADPH + (n+1) H(+)(in) = a plastoquinol + NADP(+) + n H(+)(out). In terms of biological role, NDH shuttles electrons from NAD(P)H:plastoquinone, via FMN and iron-sulfur (Fe-S) centers, to quinones in the photosynthetic chain and possibly in a chloroplast respiratory chain. The immediate electron acceptor for the enzyme in this species is believed to be plastoquinone. Couples the redox reaction to proton translocation, and thus conserves the redox energy in a proton gradient. The polypeptide is NAD(P)H-quinone oxidoreductase subunit 2 B, chloroplastic (Ipomoea purpurea (Common morning glory)).